The primary structure comprises 178 residues: MMGDASLSVLASSQVVAEGGNNFLVPNGTFFFVLAIFLIVLAVIGTFVVPPVMKVLRERDAMVAKTAADNRKAAEQFEAAQADYEEAMTEARVQASSLRDNARAEGRKVVEDARAKAEQEVLSTLQLAARQLKRERDAVELDLRANVASMSATLASRILGVDVAPAAATTSATKTSGR.

A helical membrane pass occupies residues 30–50 (FFFVLAIFLIVLAVIGTFVVP).

Belongs to the ATPase B chain family. As to quaternary structure, F-type ATPases have 2 components, F(1) - the catalytic core - and F(0) - the membrane proton channel. F(1) has five subunits: alpha(3), beta(3), gamma(1), delta(1), epsilon(1). F(0) has three main subunits: a(1), b(2) and c(10-14). The alpha and beta chains form an alternating ring which encloses part of the gamma chain. F(1) is attached to F(0) by a central stalk formed by the gamma and epsilon chains, while a peripheral stalk is formed by the delta and b chains.

Its subcellular location is the cell membrane. Functionally, f(1)F(0) ATP synthase produces ATP from ADP in the presence of a proton or sodium gradient. F-type ATPases consist of two structural domains, F(1) containing the extramembraneous catalytic core and F(0) containing the membrane proton channel, linked together by a central stalk and a peripheral stalk. During catalysis, ATP synthesis in the catalytic domain of F(1) is coupled via a rotary mechanism of the central stalk subunits to proton translocation. Its function is as follows. Component of the F(0) channel, it forms part of the peripheral stalk, linking F(1) to F(0). The sequence is that of ATP synthase subunit b from Mycobacterium avium (strain 104).